The sequence spans 145 residues: MIIDITEIMDLIPHRYPFLLVDRVLEIDLNKSILGIKNVTVNEPQFTGHFPTRPVMPGVLMVEAMAQIAAILVAKSLGSTKNKDVFLMAIENAKFRRIVQPGDTMHIHAVIDQQRTNVWKFSSTVTVEGEMAAESKFTAMIKDKS.

The active site involves His-49.

This sequence belongs to the thioester dehydratase family. FabZ subfamily.

Its subcellular location is the cytoplasm. The enzyme catalyses a (3R)-hydroxyacyl-[ACP] = a (2E)-enoyl-[ACP] + H2O. Its function is as follows. Involved in unsaturated fatty acids biosynthesis. Catalyzes the dehydration of short chain beta-hydroxyacyl-ACPs and long chain saturated and unsaturated beta-hydroxyacyl-ACPs. This chain is 3-hydroxyacyl-[acyl-carrier-protein] dehydratase FabZ, found in Rickettsia akari (strain Hartford).